A 306-amino-acid polypeptide reads, in one-letter code: Probable protein ABIL1 (306 aa).

Residues 200–236 (KNSKTNGARQSEFVLEETKATKPASRGKEPSTSPLPK) form a disordered region.

It belongs to the ABI family. Binds SCAR.

Its subcellular location is the cytoplasm. The protein resides in the cytoskeleton. In terms of biological role, involved in regulation of actin and microtubule organization. Part of a WAVE complex that activates the Arp2/3 complex. This is Probable protein ABIL1 from Oryza sativa subsp. japonica (Rice).